Here is a 196-residue protein sequence, read N- to C-terminus: Glutathione-specific gamma-glutamylcyclotransferase 1 (196 aa).

15–20 provides a ligand contact to substrate; sequence IFGYGS. Glutamate 95 serves as the catalytic Proton acceptor.

The protein belongs to the gamma-glutamylcyclotransferase family. ChaC subfamily.

It localises to the cytoplasm. Its subcellular location is the cytosol. The protein resides in the golgi apparatus. It is found in the trans-Golgi network. The enzyme catalyses glutathione = L-cysteinylglycine + 5-oxo-L-proline. Its function is as follows. Catalyzes the cleavage of glutathione into 5-oxo-L-proline and a Cys-Gly dipeptide. Acts specifically on glutathione, but not on other gamma-glutamyl peptides. Glutathione depletion is an important factor for apoptosis initiation and execution. Acts as a pro-apoptotic component of the unfolded protein response pathway by mediating the pro-apoptotic effects of the ATF4-ATF3-DDIT3/CHOP cascade. Negative regulator of Notch signaling pathway involved in embryonic neurogenesis: acts by inhibiting Notch cleavage by furin, maintaining Notch in an immature inactive form, thereby promoting neurogenesis in embryos. In Danio rerio (Zebrafish), this protein is Glutathione-specific gamma-glutamylcyclotransferase 1.